A 227-amino-acid polypeptide reads, in one-letter code: Cytochrome c oxidase subunit 2 (227 aa).

Residues 1–14 lie on the Mitochondrial intermembrane side of the membrane; it reads MPYPMQLGFQDATS. The chain crosses the membrane as a helical span at residues 15-45; the sequence is PIMEELTYFHDHTLMIVFLISSLVLYIIILM. The Mitochondrial matrix portion of the chain corresponds to 46–59; sequence LTTKLTHTSTMDAQ. A helical transmembrane segment spans residues 60-87; sequence EVETIWTILPAVILVLIALPSLRILYMM. Topologically, residues 88 to 227 are mitochondrial intermembrane; it reads DEIYNPYLTI…YFEKWSSMMQ (140 aa). Cu cation-binding residues include histidine 161, cysteine 196, glutamate 198, cysteine 200, histidine 204, and methionine 207. Glutamate 198 contributes to the Mg(2+) binding site. Residue tyrosine 218 is modified to Phosphotyrosine.

The protein belongs to the cytochrome c oxidase subunit 2 family. In terms of assembly, component of the cytochrome c oxidase (complex IV, CIV), a multisubunit enzyme composed of 14 subunits. The complex is composed of a catalytic core of 3 subunits MT-CO1, MT-CO2 and MT-CO3, encoded in the mitochondrial DNA, and 11 supernumerary subunits COX4I, COX5A, COX5B, COX6A, COX6B, COX6C, COX7A, COX7B, COX7C, COX8 and NDUFA4, which are encoded in the nuclear genome. The complex exists as a monomer or a dimer and forms supercomplexes (SCs) in the inner mitochondrial membrane with NADH-ubiquinone oxidoreductase (complex I, CI) and ubiquinol-cytochrome c oxidoreductase (cytochrome b-c1 complex, complex III, CIII), resulting in different assemblies (supercomplex SCI(1)III(2)IV(1) and megacomplex MCI(2)III(2)IV(2)). Found in a complex with TMEM177, COA6, COX18, COX20, SCO1 and SCO2. Interacts with TMEM177 in a COX20-dependent manner. Interacts with COX20. Interacts with COX16. It depends on Cu cation as a cofactor.

The protein resides in the mitochondrion inner membrane. It catalyses the reaction 4 Fe(II)-[cytochrome c] + O2 + 8 H(+)(in) = 4 Fe(III)-[cytochrome c] + 2 H2O + 4 H(+)(out). Functionally, component of the cytochrome c oxidase, the last enzyme in the mitochondrial electron transport chain which drives oxidative phosphorylation. The respiratory chain contains 3 multisubunit complexes succinate dehydrogenase (complex II, CII), ubiquinol-cytochrome c oxidoreductase (cytochrome b-c1 complex, complex III, CIII) and cytochrome c oxidase (complex IV, CIV), that cooperate to transfer electrons derived from NADH and succinate to molecular oxygen, creating an electrochemical gradient over the inner membrane that drives transmembrane transport and the ATP synthase. Cytochrome c oxidase is the component of the respiratory chain that catalyzes the reduction of oxygen to water. Electrons originating from reduced cytochrome c in the intermembrane space (IMS) are transferred via the dinuclear copper A center (CU(A)) of subunit 2 and heme A of subunit 1 to the active site in subunit 1, a binuclear center (BNC) formed by heme A3 and copper B (CU(B)). The BNC reduces molecular oxygen to 2 water molecules using 4 electrons from cytochrome c in the IMS and 4 protons from the mitochondrial matrix. In Osphranter robustus (Wallaroo), this protein is Cytochrome c oxidase subunit 2 (MT-CO2).